The sequence spans 96 residues: Co-chaperonin GroES (96 aa).

This sequence belongs to the GroES chaperonin family. As to quaternary structure, heptamer of 7 subunits arranged in a ring. Interacts with the chaperonin GroEL.

It localises to the cytoplasm. Functionally, together with the chaperonin GroEL, plays an essential role in assisting protein folding. The GroEL-GroES system forms a nano-cage that allows encapsulation of the non-native substrate proteins and provides a physical environment optimized to promote and accelerate protein folding. GroES binds to the apical surface of the GroEL ring, thereby capping the opening of the GroEL channel. This is Co-chaperonin GroES from Alcanivorax borkumensis (strain ATCC 700651 / DSM 11573 / NCIMB 13689 / SK2).